The chain runs to 389 residues: Mannitol-1-phosphate 5-dehydrogenase (389 aa).

5–16 (AIQFGGGNIGRG) is a binding site for NAD(+). Lysine 214 is a catalytic residue.

It belongs to the mannitol dehydrogenase family. In terms of assembly, monomer.

It carries out the reaction D-mannitol 1-phosphate + NAD(+) = beta-D-fructose 6-phosphate + NADH + H(+). Functionally, catalyzes the NAD(H)-dependent interconversion of D-fructose 6-phosphate and D-mannitol 1-phosphate in the mannitol metabolic pathway. The chain is Mannitol-1-phosphate 5-dehydrogenase from Talaromyces marneffei (strain ATCC 18224 / CBS 334.59 / QM 7333) (Penicillium marneffei).